Consider the following 1237-residue polypeptide: uncharacterized protein (1237 aa).

The 122-residue stretch at 591–712 (KDMLEIYSDL…IVLSKYTQWT (122 aa)) folds into the MHD1 domain. One can recognise a C2 domain in the interval 786 to 906 (LIEALDVAES…GDYLPREEWF (121 aa)). The 117-residue stretch at 1014–1130 (EAAIYELLDY…KPTDFLLQEC (117 aa)) folds into the MHD2 domain.

This is an uncharacterized protein from Schizosaccharomyces pombe (strain 972 / ATCC 24843) (Fission yeast).